The primary structure comprises 385 residues: MLQLREPQMVHKHLKLAVLGIVVIFTTYFIISSLSSPTSTHKTEYNSPKLQLAKELELNSNWKELGLNFQPNKKYSLPDESTLRQQLSYQFPYDESKPFPKNIWQTWKVGIDEKSFPKRYLKYQQTWEDKNPDYKHYVVPDKQCDLLIEQLYSQVPDVAKAYRIMPKSILKADFFRYLILFARGGVYTDIDTVGLKPVDEWISNSEMILEKKNRSGLVVGIEADPDRPDWADWYARRIQFCQWTIQSKRGHPMLRELIAKITDITLTRHKKGQLKKVLGKNEGGDIMNWTGPGIFTDTVFEYMNNILQSPEVFKNKKKWATIIDWKLFTGMEQPIAIDDVLVLPITSFSPDVNQMGAKDSHDPMAYAKHMFSGSWKDDGMPEMEQ.

The Cytoplasmic portion of the chain corresponds to 1–15 (MLQLREPQMVHKHLK). Residues 16 to 36 (LAVLGIVVIFTTYFIISSLSS) form a helical; Signal-anchor for type II membrane protein membrane-spanning segment. Over 37-385 (PTSTHKTEYN…KDDGMPEMEQ (349 aa)) the chain is Lumenal. A DXD motif motif is present at residues 189 to 191 (DID).

Belongs to the glycosyltransferase 32 family. Requires Mn(2+) as cofactor.

The protein resides in the endoplasmic reticulum membrane. The protein localises to the golgi apparatus membrane. It catalyses the reaction Transfers an alpha-D-mannosyl residue from GDP-mannose into lipid-linked oligosaccharide, forming an alpha-(1-&gt;6)-D-mannosyl-D-mannose linkage.. In terms of biological role, mannosyltransferase involved in outer chain elongation of asparagine-linked oligosaccharides of the type Man(9)GlcNAc(2). Adds the first alpha-1,6-mannose to the Man(8)GlcNAc(2) and Man(9)GlcNAc(2), but not Man(5)GlcNAc(2), endoplasmic reticulum intermediates. Represents the first enzymatic event required for synthesis of outer chain mannose linkages on yeast secretory proteins. N-glycan outer chain epitopes play a crucial role in the host-fungal interaction, virulence, and host immune response such as interleukin synthesis or phagocytosis by neutrophils. The polypeptide is Initiation-specific alpha-1,6-mannosyltransferase (Candida albicans (strain SC5314 / ATCC MYA-2876) (Yeast)).